We begin with the raw amino-acid sequence, 261 residues long: MAHQAHAYHMVDPSPWPLTGAIAALLMTSGLAIWFHFHSTTLMTLGLILLLLTMYQWWRDIIREGTFQGHHTPPVQKGLRYGMILFITSEVFFFLGFFWAFYHSSLAPTPELGGCWPPTGITPLDPFEVPLLNTAVLLASGVTVTWAHHSIMEGERKQAIQSLALTILLGLYFTALQAMEYYEAPFTIADGVYGSTFFVATGFHGLHVIIGSTFLAVCLLRQIQYHFTSEHHFGFEAAAWYWHFVDVVWLFLYVSIYWWGS.

Over 1-15 (MAHQAHAYHMVDPSP) the chain is Mitochondrial matrix. A helical transmembrane segment spans residues 16–34 (WPLTGAIAALLMTSGLAIW). Residues 35-40 (FHFHST) are Mitochondrial intermembrane-facing. A helical transmembrane segment spans residues 41–66 (TLMTLGLILLLLTMYQWWRDIIREGT). Over 67–72 (FQGHHT) the chain is Mitochondrial matrix. The chain crosses the membrane as a helical span at residues 73–105 (PPVQKGLRYGMILFITSEVFFFLGFFWAFYHSS). Residues 106–128 (LAPTPELGGCWPPTGITPLDPFE) lie on the Mitochondrial intermembrane side of the membrane. The chain crosses the membrane as a helical span at residues 129-152 (VPLLNTAVLLASGVTVTWAHHSIM). Residues 153 to 155 (EGE) are Mitochondrial matrix-facing. The helical transmembrane segment at 156–183 (RKQAIQSLALTILLGLYFTALQAMEYYE) threads the bilayer. The Mitochondrial intermembrane portion of the chain corresponds to 184 to 190 (APFTIAD). The helical transmembrane segment at 191–223 (GVYGSTFFVATGFHGLHVIIGSTFLAVCLLRQI) threads the bilayer. The Mitochondrial matrix portion of the chain corresponds to 224 to 232 (QYHFTSEHH). The helical transmembrane segment at 233 to 256 (FGFEAAAWYWHFVDVVWLFLYVSI) threads the bilayer. Topologically, residues 257 to 261 (YWWGS) are mitochondrial intermembrane.

It belongs to the cytochrome c oxidase subunit 3 family. In terms of assembly, component of the cytochrome c oxidase (complex IV, CIV), a multisubunit enzyme composed of 14 subunits. The complex is composed of a catalytic core of 3 subunits MT-CO1, MT-CO2 and MT-CO3, encoded in the mitochondrial DNA, and 11 supernumerary subunits COX4I, COX5A, COX5B, COX6A, COX6B, COX6C, COX7A, COX7B, COX7C, COX8 and NDUFA4, which are encoded in the nuclear genome. The complex exists as a monomer or a dimer and forms supercomplexes (SCs) in the inner mitochondrial membrane with NADH-ubiquinone oxidoreductase (complex I, CI) and ubiquinol-cytochrome c oxidoreductase (cytochrome b-c1 complex, complex III, CIII), resulting in different assemblies (supercomplex SCI(1)III(2)IV(1) and megacomplex MCI(2)III(2)IV(2)).

It is found in the mitochondrion inner membrane. It catalyses the reaction 4 Fe(II)-[cytochrome c] + O2 + 8 H(+)(in) = 4 Fe(III)-[cytochrome c] + 2 H2O + 4 H(+)(out). Functionally, component of the cytochrome c oxidase, the last enzyme in the mitochondrial electron transport chain which drives oxidative phosphorylation. The respiratory chain contains 3 multisubunit complexes succinate dehydrogenase (complex II, CII), ubiquinol-cytochrome c oxidoreductase (cytochrome b-c1 complex, complex III, CIII) and cytochrome c oxidase (complex IV, CIV), that cooperate to transfer electrons derived from NADH and succinate to molecular oxygen, creating an electrochemical gradient over the inner membrane that drives transmembrane transport and the ATP synthase. Cytochrome c oxidase is the component of the respiratory chain that catalyzes the reduction of oxygen to water. Electrons originating from reduced cytochrome c in the intermembrane space (IMS) are transferred via the dinuclear copper A center (CU(A)) of subunit 2 and heme A of subunit 1 to the active site in subunit 1, a binuclear center (BNC) formed by heme A3 and copper B (CU(B)). The BNC reduces molecular oxygen to 2 water molecules using 4 electrons from cytochrome c in the IMS and 4 protons from the mitochondrial matrix. The protein is Cytochrome c oxidase subunit 3 (mt-co3) of Cyprinus carpio (Common carp).